Reading from the N-terminus, the 255-residue chain is Homeobox protein DLX-1 (255 aa).

The segment covering 1–14 has biased composition (polar residues); that stretch reads MTMTTMPESLNSPV. 2 disordered regions span residues 1 to 38 and 95 to 118; these read MTMT…MSHG and SLAQ…EGGE. A compositionally biased stretch (low complexity) spans 25-36; the sequence is PPNQQMSPSPMS. A compositionally biased stretch (basic and acidic residues) spans 100-112; sequence RLEDPGADSEKST. Positions 128-187 form a DNA-binding region, homeobox; the sequence is IRKPRTIYSSLQLQALNRRFQQTQYLALPERAELAASLGLTQTQVKIWFQNKRSKFKKLM. The tract at residues 204–233 is disordered; that stretch reads ALSAGSPPVPPGWNPNSSSGKGSGSSAGSY. Residues 217–232 show a composition bias toward low complexity; the sequence is NPNSSSGKGSGSSAGS.

This sequence belongs to the distal-less homeobox family. As to quaternary structure, interacts with SMAD4 (via homeobox DNA-binding domain). Interacts (via homeobox DNA-binding domain) with POU4F2; this interaction suppresses DLX1-mediated transcriptional activity in postnatal retina and enhances retinal ganglion cell (RGC) differentiation. As to expression, expressed in a restricted region of the developing brain, within the diencephalon and the adjacent telencephalic regions.

It localises to the nucleus. Its function is as follows. Plays a role as a transcriptional activator or repressor. Inhibits several cytokine signaling pathways, such as TGFB1, activin-A/INHBA and BMP4 by interfering with the transcriptional stimulatory activity of transcription factors, such as MSX2, FAST2, SMAD2 and SMAD3 during hematopoietic cell differentiation. Plays a role in terminal differentiation of interneurons, such as amacrine and bipolar cells in the developing retina. Likely to play a regulatory role in the development of the ventral forebrain. May play a role in craniofacial patterning and morphogenesis and may be involved in the early development of diencephalic subdivisions. The protein is Homeobox protein DLX-1 (Dlx1) of Mus musculus (Mouse).